The primary structure comprises 448 residues: NADP-specific glutamate dehydrogenase (448 aa).

The substrate site is built by K88, Q109, and K112. The active-site Proton donor is the K124. G163 is a binding site for substrate. NADP(+) contacts are provided by T207 and N238. S381 is a binding site for substrate.

This sequence belongs to the Glu/Leu/Phe/Val dehydrogenases family. As to quaternary structure, homohexamer.

It catalyses the reaction L-glutamate + NADP(+) + H2O = 2-oxoglutarate + NH4(+) + NADPH + H(+). In terms of biological role, catalyzes the reversible oxidative deamination of glutamate to alpha-ketoglutarate and ammonia. This is NADP-specific glutamate dehydrogenase (gdhA) from Helicobacter pylori (strain J99 / ATCC 700824) (Campylobacter pylori J99).